The following is a 637-amino-acid chain: Phospholipase B (637 aa).

An N-terminal signal peptide occupies residues 1–19; it reads MSIITTAFALSLLATTAFA. The 527-residue stretch at 46-572 folds into the PLA2c domain; it reads DCPSNVTWIR…DTWCWAGDDN (527 aa). N-linked (GlcNAc...) asparagine glycosylation is found at Asn50, Asn56, Asn122, Asn231, Asn246, Asn272, Asn314, Asn343, Asn387, Asn433, Asn481, Asn501, Asn528, Asn553, Asn572, Asn594, and Asn606.

Belongs to the lysophospholipase family. N-glycosylated.

Its subcellular location is the secreted. It carries out the reaction a 1-acyl-sn-glycero-3-phosphocholine + H2O = sn-glycerol 3-phosphocholine + a fatty acid + H(+). Exhibits phospholipase B (PLB), lysophospholipase (LPL) and lysophospholipase/transacylase (LPTA) activities. The sequence is that of Phospholipase B (PLB1) from Cryptococcus neoformans var. neoformans serotype D (strain B-3501A) (Filobasidiella neoformans).